Reading from the N-terminus, the 340-residue chain is Armadillo repeat-containing protein 12 (340 aa).

The interaction with TBC1D15 stretch occupies residues 1–101 (MGKTIPRFLE…NITRCVYLLE (101 aa)). 3 ARM repeats span residues 100–139 (LEAE…AFSG), 179–218 (LPDY…YLAQ), and 278–318 (SLHE…SLQC). Residues 321 to 340 (DLGSRPSSCRPSHSCFKTGK) form a disordered region. Residues 324–340 (SRPSSCRPSHSCFKTGK) are compositionally biased toward low complexity.

Interacts with TBC1D15, TBC1D21, GK2 and IMMT. Interacts with VDAC2 and VDAC3 in a TBC1D21-dependent manner. Interacts (via ARM domains) with RBBP4. Testis-specific.

It localises to the nucleus. It is found in the mitochondrion outer membrane. Essential for male fertility and sperm mitochondrial sheath formation. Required for proper mitochondrial elongation and coiling along the flagellum during the formation of the mitochondrial sheath. Facilitates the growth and aggressiveness of neuroblastoma cells. Increases the EZH2 activity and H3K27me3 levels in a RBBP4-dependent manner, and facilitates the enrichment of polycomb repressive complex 2 and H3K27me3 on gene promoters, resulting in transcriptional repression of tumor suppressors affecting the proliferation, invasion, and metastasis of tumor cells. The sequence is that of Armadillo repeat-containing protein 12 (Armc12) from Mus musculus (Mouse).